A 351-amino-acid chain; its full sequence is Ubiquinol oxidase 4, chloroplastic/chromoplastic (351 aa).

A chloroplast and chromoplast-targeting transit peptide spans 1 to 56; sequence MAAISGISSGTLTISRPLVTLRRSRAAVSYSSSHRLLHHLPLSSRRLLLRNNHRVQ. Residues 71 to 91 are disordered; sequence ESFKAETSTGTEPLEEPNMSS. The chain crosses the membrane as a helical span at residues 132–152; the sequence is FFVLETIARVPYFAFMSVLHM. E136, E175, and H178 together coordinate Fe cation. Residues 195–215 form a helical membrane-spanning segment; the sequence is FLAQHIATFYYFMTVFLYILS. 3 residues coordinate Fe cation: E227, E296, and H299.

It belongs to the alternative oxidase family. The cofactor is Fe cation. In terms of tissue distribution, ubiquitous.

Its subcellular location is the plastid. It localises to the chloroplast thylakoid membrane. The protein resides in the chromoplast membrane. The catalysed reaction is 2 a ubiquinol + O2 = 2 a ubiquinone + 2 H2O. In terms of biological role, acts early in chloroplast biogenesis as a component of a redox chain responsible for phytoene desaturation. Prevents the generation of toxic oxygen radicals and photooxidation of the nascent photosynthetic apparatus. Involved in the differentiation of multiple plastid types, including chloroplasts, amyloplasts, and etioplasts. Might participate in the chloroplast respiratory chain. The chain is Ubiquinol oxidase 4, chloroplastic/chromoplastic (AOX4) from Arabidopsis thaliana (Mouse-ear cress).